Here is a 363-residue protein sequence, read N- to C-terminus: Palmitoyltransferase ZDHHC9 (363 aa).

At 1-35 (MSVMVVRKKVTRKWEKLPGRNTFCCDGRVMMARQK) the chain is on the cytoplasmic side. A helical transmembrane segment spans residues 36-56 (GIFYLTLFLILGTCTLFFAFE). Residues 57 to 63 (CRYLAVQ) lie on the Lumenal side of the membrane. A helical transmembrane segment spans residues 64-84 (LSPAIPVFAAMLFLFSMATLL). Residues 85–183 (RTSFSDPGVI…NCVGKRNYRY (99 aa)) are Cytoplasmic-facing. One can recognise a DHHC domain in the interval 139 to 189 (KYCYTCKIFRPPRASHCSICDNCVERFDHHCPWVGNCVGKRNYRYFYLFIL). Cys-169 acts as the S-palmitoyl cysteine intermediate in catalysis. A helical transmembrane segment spans residues 184–204 (FYLFILSLSLLTIYVFAFNIV). Topologically, residues 205-228 (YVALKSLKIGFLETLKETPGTVLE) are lumenal. A helical transmembrane segment spans residues 229–249 (VLICFFTLWSVVGLTGFHTFL). Over 250–363 (VALNQTTNED…PPQEVTEAEK (114 aa)) the chain is Cytoplasmic. A disordered region spans residues 303-363 (PLEESGSRPP…PPQEVTEAEK (61 aa)). The span at 310–322 (RPPSTQEASTSLL) shows a compositional bias: polar residues. The span at 345–355 (EMPPPEPPEPP) shows a compositional bias: pro residues.

Belongs to the DHHC palmitoyltransferase family. ERF2/ZDHHC9 subfamily. Interacts with GOLGA7.

It localises to the endoplasmic reticulum membrane. The protein resides in the golgi apparatus membrane. It catalyses the reaction L-cysteinyl-[protein] + hexadecanoyl-CoA = S-hexadecanoyl-L-cysteinyl-[protein] + CoA. Palmitoyltransferase that catalyzes the addition of palmitate onto various protein substrates, such as ADRB2, GSDMD, HRAS, NRAS and CGAS. The ZDHHC9-GOLGA7 complex is a palmitoyltransferase specific for HRAS and NRAS. May have a palmitoyltransferase activity toward the beta-2 adrenergic receptor/ADRB2 and therefore regulate G protein-coupled receptor signaling. Acts as a regulator of innate immunity by catalyzing palmitoylation of CGAS, thereby promoting CGAS homodimerization and cyclic GMP-AMP synthase activity. Activates pyroptosis by catalyzing palmitoylation of gasdermin-D (GSDMD), thereby promoting membrane translocation and pore formation of GSDMD. The sequence is that of Palmitoyltransferase ZDHHC9 (ZDHHC9) from Bos taurus (Bovine).